We begin with the raw amino-acid sequence, 335 residues long: Probable cytosolic iron-sulfur protein assembly protein Ciao1 (335 aa).

WD repeat units lie at residues 12–51 (GHKG…WSTK), 57–96 (GHKR…FECN), 101–140 (GHEN…EFEC), 146–185 (PHTQ…NDWD), 192–231 (SHTS…NTAG), 250–289 (QHSR…KPDE), and 301–335 (AHDQ…KVTE).

It belongs to the WD repeat CIA1 family. Conjugated to URM1, a ubiquitin-like protein.

Essential component of the cytosolic iron-sulfur (Fe/S) protein assembly machinery. Required for the maturation of extramitochondrial Fe/S proteins. The protein is Probable cytosolic iron-sulfur protein assembly protein Ciao1 of Drosophila melanogaster (Fruit fly).